Here is a 415-residue protein sequence, read N- to C-terminus: Actin-like protein 7B (415 aa).

Positions 1–31 are disordered; that stretch reads MATRNSPMPLGTAQGDPGEAGTRPGPDASLR. Serine 6 carries the post-translational modification Phosphoserine.

This sequence belongs to the actin family. In terms of tissue distribution, detected only in the testis and, to a lesser extent, in the prostate.

It is found in the cytoplasm. It localises to the cytoskeleton. This chain is Actin-like protein 7B (ACTL7B), found in Homo sapiens (Human).